Here is a 182-residue protein sequence, read N- to C-terminus: Biotin transporter BioY2 (182 aa).

The next 5 membrane-spanning stretches (helical) occupy residues 12-32 (IALGAAIIAVLSPLAIPIGIV), 54-74 (FFAILLYLLLGFIGIPVFTGG), 78-98 (IAVLFGPTGGFLLAFLVMGTL), 111-131 (IPAFIINIVGHLLMLVIGTLW), and 150-170 (PFVFVEIIKAILVTIFGLALI).

The protein belongs to the BioY family. In E.coli forms a stable energy-coupling factor (ECF) transporter complex composed of 2 membrane-embedded substrate-binding protein (S component), 2 ATP-binding proteins (A and A' components) and 2 transmembrane proteins (T component), probably with a stoichiometry of 2:1:1:2. May be able to interact with more than 1 S component at a time.

Its subcellular location is the cell membrane. Its function is as follows. Probably a biotin-binding protein that interacts with the energy-coupling factor (ECF) ABC-transporter complex. Unlike classic ABC transporters this ECF transporter provides the energy necessary to transport a number of different substrates. The substrates themselves are bound by transmembrane, not extracytoplasmic soluble proteins. This is Biotin transporter BioY2 (bioY2) from Lactococcus lactis subsp. cremoris (strain MG1363).